The primary structure comprises 804 residues: Phenylalanine--tRNA ligase beta subunit (804 aa).

The 122-residue stretch at 40–161 folds into the tRNA-binding domain; that stretch reads FSMIDYLIIG…KANLGDTEVY (122 aa). Positions 413-486 constitute a B5 domain; the sequence is EYHQQVKVNY…KILNINLFQP (74 aa). Residues aspartate 464, aspartate 470, glutamate 473, and glutamate 474 each contribute to the Mg(2+) site. An FDX-ACB domain is found at 710–804; that stretch reads DHYQEVTRDI…DLMKTKQILI (95 aa).

This sequence belongs to the phenylalanyl-tRNA synthetase beta subunit family. Type 1 subfamily. Tetramer of two alpha and two beta subunits. The cofactor is Mg(2+).

Its subcellular location is the cytoplasm. The catalysed reaction is tRNA(Phe) + L-phenylalanine + ATP = L-phenylalanyl-tRNA(Phe) + AMP + diphosphate + H(+). The sequence is that of Phenylalanine--tRNA ligase beta subunit from Mycoplasmoides gallisepticum (strain R(low / passage 15 / clone 2)) (Mycoplasma gallisepticum).